The following is a 241-amino-acid chain: 2-C-methyl-D-erythritol 4-phosphate cytidylyltransferase (241 aa).

The protein belongs to the IspD/TarI cytidylyltransferase family. IspD subfamily.

The enzyme catalyses 2-C-methyl-D-erythritol 4-phosphate + CTP + H(+) = 4-CDP-2-C-methyl-D-erythritol + diphosphate. It functions in the pathway isoprenoid biosynthesis; isopentenyl diphosphate biosynthesis via DXP pathway; isopentenyl diphosphate from 1-deoxy-D-xylulose 5-phosphate: step 2/6. Its function is as follows. Catalyzes the formation of 4-diphosphocytidyl-2-C-methyl-D-erythritol from CTP and 2-C-methyl-D-erythritol 4-phosphate (MEP). This chain is 2-C-methyl-D-erythritol 4-phosphate cytidylyltransferase, found in Shewanella denitrificans (strain OS217 / ATCC BAA-1090 / DSM 15013).